The sequence spans 438 residues: MSIEVDWAAATSGPDGEALAERIRSFVHDKFQEITLPRFIRSVQVHSFDFGTIAPDLEVKDICEPFADFYEEEADDADTSVASEELGHELHESPYEDDMTYNPTAHNLHSFSHHPYPGEGFQPSALRSPLGDHLNPHFMPRASTPGIPGGTSTLGYHMRSLGGLSGTQTPLAAVAGGTSFASGWSDSGMGVGPRSQAARPAGPHHLAEPDLDTTNSTSRPSTANTLPSHPSLGHSGSSGSNPHTSDPTDAPQPSIETSDDPAAEGHSLPIPPRMRERRPEDFQVLCHAKYAGDVRMSLTAEILLDYPMPSFVGLPLKLNVTGITFDGVAVVAYIRKRVHFCFLSAEDADALLGSEQSQGSQNPSDDGRPRSGGDQKDKELKRQGGLLQEIRVDSEIGRKEDGKQVLKNVGKVERFVLAQVRRIFEEELVYPSFWTFLV.

In terms of domain architecture, SMP-LTD spans M1–V438. 3 disordered regions span residues S110–L154, S185–R277, and G353–E379. Residues D212–L226 are compositionally biased toward polar residues. The segment covering P227–S245 has biased composition (low complexity). The segment covering S354 to S364 has biased composition (polar residues). Residues D365–E379 are compositionally biased toward basic and acidic residues.

This sequence belongs to the MDM12 family. In terms of assembly, component of the ER-mitochondria encounter structure (ERMES) or MDM complex, composed of mmm1, mdm10, mdm12 and mdm34. A mmm1 homodimer associates with one molecule of mdm12 on each side in a pairwise head-to-tail manner, and the SMP-LTD domains of mmm1 and mdm12 generate a continuous hydrophobic tunnel for phospholipid trafficking.

The protein resides in the mitochondrion outer membrane. It is found in the endoplasmic reticulum membrane. Its function is as follows. Component of the ERMES/MDM complex, which serves as a molecular tether to connect the endoplasmic reticulum (ER) and mitochondria. Components of this complex are involved in the control of mitochondrial shape and protein biogenesis, and function in nonvesicular lipid trafficking between the ER and mitochondria. Mdm12 is required for the interaction of the ER-resident membrane protein mmm1 and the outer mitochondrial membrane-resident beta-barrel protein mdm10. The mdm12-mmm1 subcomplex functions in the major beta-barrel assembly pathway that is responsible for biogenesis of all mitochondrial outer membrane beta-barrel proteins, and acts in a late step after the SAM complex. The mdm10-mdm12-mmm1 subcomplex further acts in the TOM40-specific pathway after the action of the mdm12-mmm1 complex. Essential for establishing and maintaining the structure of mitochondria and maintenance of mtDNA nucleoids. This Penicillium rubens (strain ATCC 28089 / DSM 1075 / NRRL 1951 / Wisconsin 54-1255) (Penicillium chrysogenum) protein is Mitochondrial distribution and morphology protein 12.